Here is a 146-residue protein sequence, read N- to C-terminus: Basic phospholipase A2 paradoxin-like alpha chain (146 aa).

The first 27 residues, 1–27 (MHPAHLLVLLAVCVSLLGASDIPPLPL), serve as a signal peptide directing secretion. 7 cysteine pairs are disulfide-bonded: Cys38–Cys99, Cys54–Cys145, Cys56–Cys72, Cys71–Cys126, Cys78–Cys119, Cys88–Cys112, and Cys106–Cys117. Residues Tyr55, Gly57, and Gly59 each coordinate Ca(2+). Residue His75 is part of the active site. A Ca(2+)-binding site is contributed by Asp76. Residue Asp120 is part of the active site.

It belongs to the phospholipase A2 family. Group I subfamily. D49 sub-subfamily. Heterotrimer of alpha, beta, and gamma chains; non-covalently linked. Ca(2+) serves as cofactor. Expressed by the venom gland.

It localises to the secreted. It catalyses the reaction a 1,2-diacyl-sn-glycero-3-phosphocholine + H2O = a 1-acyl-sn-glycero-3-phosphocholine + a fatty acid + H(+). In terms of biological role, heterotrimer: Snake venom phospholipase A2 (PLA2) heterotrimer that acts as a potent presynaptic neurotoxin by blocking synaptic transmission and synaptic vesicle recycling. May act by binding in a calcium-dependent fashion to neurotonal pentraxin-1 (NPTX1) and neurotonal pentraxin-2 (NPTX2), but not to neuronal pentraxin receptor (NPTXR). Also binds to taipoxin-associated calcium binding protein 49 (RCN2), a protein localized in the lumen of endoplasmic reticulum. Functionally, monomer (alpha chain): Snake venom phospholipase A2 (PLA2) alpha chain that possesses the same high enzymatic activity than the heterotrimer. PLA2 catalyzes the calcium-dependent hydrolysis of the 2-acyl groups in 3-sn-phosphoglycerides. The sequence is that of Basic phospholipase A2 paradoxin-like alpha chain from Oxyuranus microlepidotus (Inland taipan).